The sequence spans 432 residues: Homeobox protein Hox-D3 (432 aa).

Disordered stretches follow at residues 43–62 (YSTP…LDTD), 68–197 (CSIQ…SKRV), 253–280 (QKAK…AGHV), and 400–432 (HHGP…LTHL). Gly residues predominate over residues 97–106 (NSQGGGGGSQ). A compositionally biased stretch (pro residues) spans 116-131 (PPQPPPPPPTLPPSSP). A compositionally biased stretch (polar residues) spans 148–158 (NASSSSATISK). The Antp-type hexapeptide signature appears at 160-165 (IFPWMK). The homeobox DNA-binding region spans 194–253 (SKRVRTAYTSAQLVELEKEFHFNRYLCRPRRVEMANLLNLTERQIKIWFQNRRMKYKKDQ).

Belongs to the Antp homeobox family.

It localises to the nucleus. Functionally, sequence-specific transcription factor which is part of a developmental regulatory system that provides cells with specific positional identities on the anterior-posterior axis. In Homo sapiens (Human), this protein is Homeobox protein Hox-D3 (HOXD3).